The chain runs to 369 residues: Chaperone protein DnaJ (369 aa).

In terms of domain architecture, J spans D5–G70. A CR-type zinc finger spans residues G128–Q206. 8 residues coordinate Zn(2+): C141, C144, C158, C161, C180, C183, C194, and C197. CXXCXGXG motif repeat units lie at residues C141 to G148, C158 to G165, C180 to G187, and C194 to G201.

This sequence belongs to the DnaJ family. Homodimer. Zn(2+) serves as cofactor.

The protein localises to the cytoplasm. Participates actively in the response to hyperosmotic and heat shock by preventing the aggregation of stress-denatured proteins and by disaggregating proteins, also in an autonomous, DnaK-independent fashion. Unfolded proteins bind initially to DnaJ; upon interaction with the DnaJ-bound protein, DnaK hydrolyzes its bound ATP, resulting in the formation of a stable complex. GrpE releases ADP from DnaK; ATP binding to DnaK triggers the release of the substrate protein, thus completing the reaction cycle. Several rounds of ATP-dependent interactions between DnaJ, DnaK and GrpE are required for fully efficient folding. Also involved, together with DnaK and GrpE, in the DNA replication of plasmids through activation of initiation proteins. In Nitrosomonas europaea (strain ATCC 19718 / CIP 103999 / KCTC 2705 / NBRC 14298), this protein is Chaperone protein DnaJ.